The sequence spans 437 residues: Adenylyltransferase and sulfurtransferase MOCS3 (437 aa).

ATP contacts are provided by residues glycine 82, aspartate 103, 110 to 114 (TNLHR), lysine 127, and 171 to 172 (DN). Residues cysteine 212 and cysteine 215 each contribute to the Zn(2+) site. Cysteine 229 serves as the catalytic Glycyl thioester intermediate; for adenylyltransferase activity. Cysteine 287 and cysteine 290 together coordinate Zn(2+). One can recognise a Rhodanese domain in the interval 337 to 435 (SNVPHLLVDV…WTHNIDPEFP (99 aa)). Cysteine 391 acts as the Cysteine persulfide intermediate; for sulfurtransferase activity in catalysis.

The protein in the N-terminal section; belongs to the HesA/MoeB/ThiF family. UBA4 subfamily. Requires Zn(2+) as cofactor.

The protein resides in the cytoplasm. It localises to the cytosol. It carries out the reaction [molybdopterin-synthase sulfur-carrier protein]-C-terminal Gly-Gly + ATP + H(+) = [molybdopterin-synthase sulfur-carrier protein]-C-terminal Gly-Gly-AMP + diphosphate. The enzyme catalyses [molybdopterin-synthase sulfur-carrier protein]-C-terminal Gly-Gly-AMP + S-sulfanyl-L-cysteinyl-[cysteine desulfurase] + AH2 = [molybdopterin-synthase sulfur-carrier protein]-C-terminal-Gly-aminoethanethioate + L-cysteinyl-[cysteine desulfurase] + A + AMP + 2 H(+). It functions in the pathway tRNA modification; 5-methoxycarbonylmethyl-2-thiouridine-tRNA biosynthesis. It participates in cofactor biosynthesis; molybdopterin biosynthesis. Functionally, plays a central role in 2-thiolation of mcm(5)S(2)U at tRNA wobble positions of cytosolic tRNA(Lys), tRNA(Glu) and tRNA(Gln). Also essential during biosynthesis of the molybdenum cofactor. Acts by mediating the C-terminal thiocarboxylation of sulfur carriers URM1 and MOCS2A. Its N-terminus first activates URM1 and MOCS2A as acyl-adenylates (-COAMP), then the persulfide sulfur on the catalytic cysteine is transferred to URM1 and MOCS2A to form thiocarboxylation (-COSH) of their C-terminus. The reaction probably involves hydrogen sulfide that is generated from the persulfide intermediate and that acts as a nucleophile towards URM1 and MOCS2A. Subsequently, a transient disulfide bond is formed. Does not use thiosulfate as sulfur donor; NFS1 probably acting as a sulfur donor for thiocarboxylation reactions. The chain is Adenylyltransferase and sulfurtransferase MOCS3 from Aedes aegypti (Yellowfever mosquito).